The sequence spans 484 residues: ATP synthase subunit beta (484 aa).

An ATP-binding site is contributed by 162 to 169; the sequence is GGAGVGKT.

This sequence belongs to the ATPase alpha/beta chains family. In terms of assembly, F-type ATPases have 2 components, CF(1) - the catalytic core - and CF(0) - the membrane proton channel. CF(1) has five subunits: alpha(3), beta(3), gamma(1), delta(1), epsilon(1). CF(0) has four main subunits: a(1), b(1), b'(1) and c(9-12).

Its subcellular location is the cellular thylakoid membrane. The enzyme catalyses ATP + H2O + 4 H(+)(in) = ADP + phosphate + 5 H(+)(out). Functionally, produces ATP from ADP in the presence of a proton gradient across the membrane. The catalytic sites are hosted primarily by the beta subunits. This chain is ATP synthase subunit beta, found in Trichodesmium erythraeum (strain IMS101).